The chain runs to 112 residues: MAMVYIKMSFHNTIVTVIDGRANVLSWCSSGVCKFKGRQKTTAFATKIVITRALKSVLERGFNGIDIKVSGPGFGRNVAIRAIIKMGFKVFSLKDITPLPYNGCRPRKRRRT.

This sequence belongs to the universal ribosomal protein uS11 family. As to quaternary structure, part of the 30S ribosomal subunit.

The protein resides in the plastid. The chain is Small ribosomal subunit protein uS11c from Euglena longa (Euglenophycean alga).